We begin with the raw amino-acid sequence, 413 residues long: Peptidase T (413 aa).

His84 is a Zn(2+) binding site. Asp86 is an active-site residue. Asp147 contacts Zn(2+). Glu181 functions as the Proton acceptor in the catalytic mechanism. Zn(2+) is bound by residues Glu182, Asp204, and His386.

The protein belongs to the peptidase M20B family. Zn(2+) is required as a cofactor.

Its subcellular location is the cytoplasm. The enzyme catalyses Release of the N-terminal residue from a tripeptide.. Functionally, cleaves the N-terminal amino acid of tripeptides. This is Peptidase T from Ligilactobacillus salivarius (strain UCC118) (Lactobacillus salivarius).